Reading from the N-terminus, the 874-residue chain is Alanine--tRNA ligase (874 aa).

Residues H563, H567, C665, and H669 each contribute to the Zn(2+) site.

It belongs to the class-II aminoacyl-tRNA synthetase family. It depends on Zn(2+) as a cofactor.

The protein resides in the cytoplasm. It carries out the reaction tRNA(Ala) + L-alanine + ATP = L-alanyl-tRNA(Ala) + AMP + diphosphate. In terms of biological role, catalyzes the attachment of alanine to tRNA(Ala) in a two-step reaction: alanine is first activated by ATP to form Ala-AMP and then transferred to the acceptor end of tRNA(Ala). Also edits incorrectly charged Ser-tRNA(Ala) and Gly-tRNA(Ala) via its editing domain. The polypeptide is Alanine--tRNA ligase (Actinobacillus pleuropneumoniae serotype 5b (strain L20)).